A 199-amino-acid polypeptide reads, in one-letter code: Thymidine kinase (199 aa).

ATP is bound by residues Gly15 to Ser22 and Asp88 to Gln91. Catalysis depends on Glu89, which acts as the Proton acceptor. Cys145, Cys148, Cys183, and His186 together coordinate Zn(2+).

It belongs to the thymidine kinase family. Homotetramer.

The protein localises to the cytoplasm. The enzyme catalyses thymidine + ATP = dTMP + ADP + H(+). This Staphylococcus haemolyticus (strain JCSC1435) protein is Thymidine kinase.